A 610-amino-acid chain; its full sequence is UvrABC system protein C (610 aa).

A GIY-YIG domain is found at 19–97 (GAPGVYKMLD…IKRHKPRYNI (79 aa)). In terms of domain architecture, UVR spans 207 to 242 (EALIDRLAQRMEQAAQRLEFEKAARYRDQISNLRTV).

It belongs to the UvrC family. In terms of assembly, interacts with UvrB in an incision complex.

Its subcellular location is the cytoplasm. Functionally, the UvrABC repair system catalyzes the recognition and processing of DNA lesions. UvrC both incises the 5' and 3' sides of the lesion. The N-terminal half is responsible for the 3' incision and the C-terminal half is responsible for the 5' incision. This is UvrABC system protein C from Methylococcus capsulatus (strain ATCC 33009 / NCIMB 11132 / Bath).